Here is a 387-residue protein sequence, read N- to C-terminus: MNSTDVTKGFTEQFGKQAEHTFFAPGRINLIGEHTDYNGGHVFPCAISLGTYAAVGTNEDNAFRLYSANFQRLALLTSIFGSFQDKRGLWTDYFQGMARVMKTAGANFTHGLNVYINGNLPDGAGLSSSASLEMLVGTILNSLFDGGFEPLELVQFGVKVENDYIGVNSGVMDQFAIEMGRANQATLLDTNTMKYEYLPVEMGDNVIVIMNTNKRRELADSKYNERRSECEKALAMLQKGIEVKSLGQLSEDEFDENTYLIYDPILIKRARHAVFENQRTLKASKALQDGDLKTFGKLVSASGVSLAFDYEVTGIELDTLVTNALKQRGVLGARMTGAGFGGCAIAIVNSADVEDFIDNVGKTYREKIGYDAHFYVADIADGAKQLN.

33-36 (EHTD) is a binding site for substrate. Residues S67 and 123–129 (GAGLSSS) contribute to the ATP site. Mg(2+)-binding residues include S129 and E161. D173 functions as the Proton acceptor in the catalytic mechanism. Y223 is a binding site for substrate.

It belongs to the GHMP kinase family. GalK subfamily.

It localises to the cytoplasm. The catalysed reaction is alpha-D-galactose + ATP = alpha-D-galactose 1-phosphate + ADP + H(+). It participates in carbohydrate metabolism; galactose metabolism. Its function is as follows. Catalyzes the transfer of the gamma-phosphate of ATP to D-galactose to form alpha-D-galactose-1-phosphate (Gal-1-P). The protein is Galactokinase of Lacticaseibacillus casei (Lactobacillus casei).